The following is a 658-amino-acid chain: Protein CFAP20DC (658 aa).

Disordered stretches follow at residues Gln312–Tyr522 and Pro589–Ser634. A compositionally biased stretch (polar residues) spans Ser319–Leu328. Basic and acidic residues predominate over residues Pro339–Ser349. Composition is skewed to low complexity over residues Arg351–Arg363 and Ser417–Asp434. Residues Asp494 to Thr506 are compositionally biased toward basic and acidic residues. The span at Glu507–Glu521 shows a compositional bias: acidic residues. A compositionally biased stretch (polar residues) spans Gln625–Ser634.

The chain is Protein CFAP20DC from Rattus norvegicus (Rat).